Here is a 258-residue protein sequence, read N- to C-terminus: Phosphatidylglycerol--prolipoprotein diacylglyceryl transferase (258 aa).

7 consecutive transmembrane segments (helical) span residues 9–29, 53–73, 90–110, 117–139, 169–189, 198–218, and 230–250; these read ILIQ…ATGF, LLTY…TLIY, EGGL…WLFV, KFLW…IRLG, PVQL…LMLF, GFLF…IEYF, and LISV…VLML. An a 1,2-diacyl-sn-glycero-3-phospho-(1'-sn-glycerol)-binding site is contributed by arginine 137.

Belongs to the Lgt family.

Its subcellular location is the cell inner membrane. The enzyme catalyses L-cysteinyl-[prolipoprotein] + a 1,2-diacyl-sn-glycero-3-phospho-(1'-sn-glycerol) = an S-1,2-diacyl-sn-glyceryl-L-cysteinyl-[prolipoprotein] + sn-glycerol 1-phosphate + H(+). It functions in the pathway protein modification; lipoprotein biosynthesis (diacylglyceryl transfer). Catalyzes the transfer of the diacylglyceryl group from phosphatidylglycerol to the sulfhydryl group of the N-terminal cysteine of a prolipoprotein, the first step in the formation of mature lipoproteins. The polypeptide is Phosphatidylglycerol--prolipoprotein diacylglyceryl transferase (Tolumonas auensis (strain DSM 9187 / NBRC 110442 / TA 4)).